An 817-amino-acid polypeptide reads, in one-letter code: Dynamin-related protein 5A (817 aa).

A compositionally biased stretch (polar residues) spans 1–20; the sequence is MANSNTYLTTPTKTPSSRRN. The interval 1–37 is disordered; the sequence is MANSNTYLTTPTKTPSSRRNQQSQSKMQSHSKDPINA. The region spanning 59–346 is the Dynamin-type G domain; that stretch reads KLPIPEIVAI…LQKRYKEAAP (288 aa). A G1 motif region spans residues 69–76; that stretch reads GGQSDGKS. GTP is bound at residue 69-76; the sequence is GGQSDGKS. The segment at 95 to 97 is G2 motif; that stretch reads GTR. The segment at 175-178 is G3 motif; sequence DTPG. Residues 175–179 and 244–247 contribute to the GTP site; these read DTPGF and SKFD. Residues 244–247 are G4 motif; sequence SKFD. The tract at residues 280–283 is G5 motif; it reads LPKD. Disordered regions lie at residues 405–425 and 616–658; these read APEQWGKTTEEERGESGIGSW and LSDT…ETPS. A compositionally biased stretch (basic and acidic residues) spans 618 to 629; sequence DTSRDEPMKDQE.

The protein belongs to the TRAFAC class dynamin-like GTPase superfamily. Dynamin/Fzo/YdjA family. As to expression, expressed in root and leaf meristems.

The protein localises to the cytoplasm. The protein resides in the cytoskeleton. Its subcellular location is the phragmoplast. Functionally, probable microtubule-associated force-producing protein that is targeted to the forming cell plate during cytokinesis. May play a role in cell division. In Arabidopsis thaliana (Mouse-ear cress), this protein is Dynamin-related protein 5A (DRP5A).